A 3063-amino-acid chain; its full sequence is Collagen alpha-1(XII) chain (3063 aa).

A signal peptide spans 1 to 23 (MRSRLPPALAALGAALLLSSIEA). In terms of domain architecture, Fibronectin type-III 1 spans 27 to 117 (PPSDLNFKII…GQLTIQTGSS (91 aa)). The 177-residue stretch at 140-316 (DLVFLVDGSW…DIQNEIISQV (177 aa)) folds into the VWFA 1 domain. The O-linked (Xyl...) (chondroitin sulfate) serine glycan is linked to Ser329. The Fibronectin type-III 2 domain occupies 336–426 (PPSNLIAMEV…SIMEKTQPMK (91 aa)). One can recognise a VWFA 2 domain in the interval 440 to 616 (DIVFLVDGSY…RISFELTQSI (177 aa)). Fibronectin type-III domains are found at residues 634–722 (PPKD…TEEV), 725–816 (APRN…VRGN), 817–905 (PRDL…LEER), 907–998 (SPQD…LSQD), 999–1087 (SKTL…ASRF), and 1089–1179 (SPRN…TLSD). Asn700 is a glycosylation site (N-linked (GlcNAc...) asparagine). A glycan (O-linked (Xyl...) (chondroitin sulfate) serine) is linked at Ser798. Residues 799–830 (GPGTPLTGNAATEEVRGNPRDLRVSDPTTSTM) form a disordered region. The segment covering 811–822 (EEVRGNPRDLRV) has biased composition (basic and acidic residues). The Cell attachment site signature appears at 862–864 (RGD). Ser889 and Ser981 each carry an O-linked (Xyl...) (chondroitin sulfate) serine glycan. A disordered region spans residues 1077–1099 (RQGSGTTASRFKSPRNLKTSDPT). Positions 1079–1099 (GSGTTASRFKSPRNLKTSDPT) are enriched in polar residues. Residues 1199 to 1371 (DIVLLVDGSW…ESLSRIVDDL (173 aa)) enclose the VWFA 3 domain. Fibronectin type-III domains lie at 1387 to 1476 (APSN…LPVP), 1477 to 1567 (VVSL…LPLP), 1568 to 1658 (RPQD…VPAP), 1659 to 1754 (TNLK…APKS), 1755 to 1849 (GPRN…TVRN), 1850 to 1935 (LRVY…LMRG), 1936 to 2026 (LARN…LPRS), 2027 to 2117 (GPRN…VGLL), 2118 to 2206 (PPQN…LYLN), and 2207 to 2294 (VTDL…TVKP). An N-linked (GlcNAc...) asparagine glycan is attached at Asn1763. A glycan (N-linked (GlcNAc...) asparagine) is linked at Asn2206. The tract at residues 2283–2312 (GVSVKEHTTVKPTEAPTEPPTPPPPPTIPP) is disordered. A compositionally biased stretch (pro residues) spans 2299–2311 (TEPPTPPPPPTIP). Residues 2323-2496 (DIVFLTDASW…ESFEKIEDNL (174 aa)) enclose the VWFA 4 domain. The segment at 2451–2746 (SGFSVFVVGV…NSCTCTQDSV (296 aa)) is nonhelical region (NC3). The Laminin G-like domain maps to 2520–2712 (GFKMLEAYNL…IQSFDIVCSP (193 aa)). N-linked (GlcNAc...) asparagine glycosylation is found at Asn2528 and Asn2679. Disordered stretches follow at residues 2743-2896 (QDSV…GDRG) and 2932-3063 (NDYQ…PGSG). 4 Collagen-like domains span residues 2747–2798 (GPPG…GPNG), 2802–2852 (PGEQ…AMGP), 2853–2898 (RGPP…RGDI), and 2941–2990 (PGPP…GERG). A triple-helical region (COL2) with 1 imperfection region spans residues 2747-2898 (GPPGPPGPAG…KGEKGDRGDI (152 aa)). Positions 2779 to 2781 (RGD) match the Cell attachment site motif. Over residues 2784 to 2794 (PPGPQGPPGPQ) the composition is skewed to pro residues. Positions 2817-2826 (PGLPGRTGTP) are enriched in low complexity. Composition is skewed to pro residues over residues 2828–2837 (LPGPPGPMGP) and 2853–2862 (RGPPGPPGSP). Residues 2864-2874 (SPGVTGPSGKP) are compositionally biased toward low complexity. The Cell attachment site signature appears at 2895–2897 (RGD). The tract at residues 2899-2941 (ASQNMMRAVARQVCEQLISGQMNRFNQMLNQIPNDYQSSRNQP) is nonhelical region (NC2). The span at 2941–2950 (PGPPGPPGPP) shows a compositional bias: pro residues. Residues 2942 to 3044 (GPPGPPGPPG…RGPPGPPGYC (103 aa)) are triple-helical region (COL1) with 2 imperfections. 14 positions are modified to 4-hydroxyproline: Pro2944, Pro2947, Pro2950, Pro2959, Pro2965, Pro2968, Pro2971, Pro2983, Pro3000, Pro3003, Pro3014, Pro3023, Pro3026, and Pro3029. The span at 2957 to 2966 (GEPGPGGRPG) shows a compositional bias: gly residues. A compositionally biased stretch (low complexity) spans 3006 to 3020 (QGESRTGPPGSTGSR). Residues 3045–3063 (DSSQCASIPYNGQGYPGSG) form a nonhelical region (NC1) region.

This sequence belongs to the fibril-associated collagens with interrupted helices (FACIT) family. In terms of assembly, trimer of identical chains each containing 190 kDa of non-triple-helical sequences. The triple-helical tail is stabilized by disulfide bonds at each end. Post-translationally, hydroxylation on proline residues within the sequence motif, GXPG, is most likely to be 4-hydroxy as this fits the requirement for 4-hydroxylation in vertebrates. In terms of processing, isoform 1 O-glycosylation; glycosaminoglycan of chondroitin-sulfate type. In terms of tissue distribution, found in collagen I-containing tissues: both isoform 1 and isoform 2 appear in amnion, chorion, skeletal muscle, small intestine, and in cell culture of dermal fibroblasts, keratinocytes and endothelial cells. Only isoform 2 is found in lung, placenta, kidney and a squamous cell carcinoma cell line. Isoform 1 is also present in the corneal epithelial Bowman's membrane (BM) and the interfibrillar matrix of the corneal stroma, but it is not detected in the limbal BM.

Its subcellular location is the secreted. The protein resides in the extracellular space. It localises to the extracellular matrix. Functionally, type XII collagen interacts with type I collagen-containing fibrils, the COL1 domain could be associated with the surface of the fibrils, and the COL2 and NC3 domains may be localized in the perifibrillar matrix. This Homo sapiens (Human) protein is Collagen alpha-1(XII) chain (COL12A1).